Here is a 114-residue protein sequence, read N- to C-terminus: Phosphoribosyl-AMP cyclohydrolase (114 aa).

Asp-80 contributes to the Mg(2+) binding site. Residue Cys-81 participates in Zn(2+) binding. Asp-82 and Asp-84 together coordinate Mg(2+). Residues Cys-97 and Cys-104 each contribute to the Zn(2+) site.

The protein belongs to the PRA-CH family. In terms of assembly, homodimer. Requires Mg(2+) as cofactor. Zn(2+) is required as a cofactor.

Its subcellular location is the cytoplasm. It catalyses the reaction 1-(5-phospho-beta-D-ribosyl)-5'-AMP + H2O = 1-(5-phospho-beta-D-ribosyl)-5-[(5-phospho-beta-D-ribosylamino)methylideneamino]imidazole-4-carboxamide. It functions in the pathway amino-acid biosynthesis; L-histidine biosynthesis; L-histidine from 5-phospho-alpha-D-ribose 1-diphosphate: step 3/9. Functionally, catalyzes the hydrolysis of the adenine ring of phosphoribosyl-AMP. This is Phosphoribosyl-AMP cyclohydrolase from Rhodococcus jostii (strain RHA1).